The primary structure comprises 513 residues: Microcin J25-processing protein McjC (513 aa).

Residues 176-436 form the Asparagine synthetase domain; sequence STIDSIIDNI…FGSDIFWKKT (261 aa).

The protein resides in the cytoplasm. Along with McjB, necessary and sufficient to process the inactive microcin J25 (McjA) precursor into the active peptide. May be involved in the formation of the amide bond between Gly-38 and Glu-53 of McjA. The polypeptide is Microcin J25-processing protein McjC (mcjC) (Escherichia coli).